A 429-amino-acid polypeptide reads, in one-letter code: Histidine--tRNA ligase (429 aa).

It belongs to the class-II aminoacyl-tRNA synthetase family. In terms of assembly, homodimer.

It localises to the cytoplasm. It carries out the reaction tRNA(His) + L-histidine + ATP = L-histidyl-tRNA(His) + AMP + diphosphate + H(+). This Acidovorax ebreus (strain TPSY) (Diaphorobacter sp. (strain TPSY)) protein is Histidine--tRNA ligase.